We begin with the raw amino-acid sequence, 341 residues long: MKNKLLSAAIGAAVLAVGASAASATTLSDVKAKGFVQCGVNTGLTGFAAPDASGNWAGFDVDFCKAVASAVFGDPTKVKYTPTNAKERFTALQSGEIDVLSRNTTWTINRDTALGFNFRPVTYYDGQGFMVRKGLNVKSALELSGAAICVQSGTTTELNLADYFKTNNLQYNPVVFENLPEVNAAYDAGRCDVYTTDQSGLYSLRLTLKNPDEHIILPEIISKEPLGPAVRQGDDQWFDIVSWTAYALINAEEFGITQANVDEMKNSPNPDIKRFLGSETDTKIGTDLGLTNDWAANVIKGVGNYGEIFERNIGQGSPLKIARGLNALWNKGGIQYAPPVR.

The first 23 residues, Met1–Ser23, serve as a signal peptide directing secretion.

The protein belongs to the bacterial solute-binding protein 3 family. In terms of assembly, the complex is composed of two ATP-binding proteins (AapP), two transmembrane proteins (AapM and AapQ) and a solute-binding protein (AapJ).

It is found in the periplasm. In terms of biological role, part of the ABC transporter complex AapJQMP involved in uptake of L-amino acids. Affects the efflux of these amino acids as well. Essential for the development of bacteroids, the differentiated legume-symbiotic forms of this bacterium, and for the effective N(2) fixation by them. The chain is General L-amino acid-binding periplasmic protein AapJ (aapJ) from Rhizobium johnstonii (strain DSM 114642 / LMG 32736 / 3841) (Rhizobium leguminosarum bv. viciae).